Reading from the N-terminus, the 172-residue chain is SsrA-binding protein (172 aa).

Belongs to the SmpB family.

It localises to the cytoplasm. Its function is as follows. Required for rescue of stalled ribosomes mediated by trans-translation. Binds to transfer-messenger RNA (tmRNA), required for stable association of tmRNA with ribosomes. tmRNA and SmpB together mimic tRNA shape, replacing the anticodon stem-loop with SmpB. tmRNA is encoded by the ssrA gene; the 2 termini fold to resemble tRNA(Ala) and it encodes a 'tag peptide', a short internal open reading frame. During trans-translation Ala-aminoacylated tmRNA acts like a tRNA, entering the A-site of stalled ribosomes, displacing the stalled mRNA. The ribosome then switches to translate the ORF on the tmRNA; the nascent peptide is terminated with the 'tag peptide' encoded by the tmRNA and targeted for degradation. The ribosome is freed to recommence translation, which seems to be the essential function of trans-translation. The sequence is that of SsrA-binding protein from Dehalococcoides mccartyi (strain CBDB1).